Here is a 334-residue protein sequence, read N- to C-terminus: Glucokinase-like protein PD_0680 (334 aa).

Ala-18–Thr-23 serves as a coordination point for ATP.

It belongs to the bacterial glucokinase family.

The protein is Glucokinase-like protein PD_0680 of Xylella fastidiosa (strain Temecula1 / ATCC 700964).